The primary structure comprises 159 residues: Transcriptional repressor NrdR (159 aa).

The segment at 3-34 is a zinc-finger region; the sequence is CPFCGGVENKVMDSRVSRDGNAIRRRRECLAC. In terms of domain architecture, ATP-cone spans 49–139; that stretch reads PTVVKKDGRR…VYRQFRDVND (91 aa).

It belongs to the NrdR family. It depends on Zn(2+) as a cofactor.

Negatively regulates transcription of bacterial ribonucleotide reductase nrd genes and operons by binding to NrdR-boxes. The protein is Transcriptional repressor NrdR of Syntrophus aciditrophicus (strain SB).